The sequence spans 326 residues: Mitochondrial glycine transporter (326 aa).

3 Solcar repeats span residues 45–134 (HPVI…SKQY), 141–225 (PTAL…TRAT), and 237–321 (LMPL…MMAK). The next 6 membrane-spanning stretches (helical) occupy residues 51-76 (FLCGSISGTCSTLLFQPLDLLKTRLQ), 109-135 (GMSPSIVRCVPGVGIYFGTLYSSKQYF), 147-172 (VILGMGSRSVAGVCMSPITVVKTRYE), 200-223 (GLTATLLRDAPFSGLYLMFYSQTR), 241-267 (VNFSCGVFAGILASLVTQPADVIKTHM), and 296-314 (GSVPRALRRTLMAAMAWTV).

The protein belongs to the mitochondrial carrier (TC 2.A.29) family. SLC25A38 subfamily.

The protein resides in the mitochondrion inner membrane. The catalysed reaction is glycine(in) = glycine(out). Functionally, mitochondrial glycine transporter that imports glycine into the mitochondrial matrix. Plays an important role in providing glycine for the first enzymatic step in heme biosynthesis, the condensation of glycine with succinyl-CoA to produce 5-aminolevulinate (ALA) in the mitochondrial matrix. Required during erythropoiesis. Its function is as follows. Plays a role as pro-apoptotic protein that induces caspase-dependent apoptosis. This chain is Mitochondrial glycine transporter, found in Rattus norvegicus (Rat).